A 425-amino-acid chain; its full sequence is Putative E3 ubiquitin-protein ligase UBR7 (425 aa).

Residues 44-116 form a UBR-type zinc finger; the sequence is EKCSYSQGSV…KNLECKLFPD (73 aa). A PHD-type; atypical zinc finger spans residues 132 to 188; sequence GLYCVCKRPYPDPEDEVPDEMIQCVVCEDWFHGRHLGAIPPESGDFQEMVCQACMRR. The disordered stretch occupies residues 212–269; sequence LPNATGMGDEDVSKPENGAPQDNGLKEDAPEHGRDSVNEVKAEQKNEPCSSSSSESDL. Residues Lys225 and Lys252 each participate in a glycyl lysine isopeptide (Lys-Gly) (interchain with G-Cter in SUMO2) cross-link. Basic and acidic residues predominate over residues 235–257; it reads GLKEDAPEHGRDSVNEVKAEQKN. Phosphoserine is present on Ser264. Glycyl lysine isopeptide (Lys-Gly) (interchain with G-Cter in SUMO2) cross-links involve residues Lys274 and Lys398.

As to expression, expressed in testis and sperm (at protein level).

It catalyses the reaction S-ubiquitinyl-[E2 ubiquitin-conjugating enzyme]-L-cysteine + [acceptor protein]-L-lysine = [E2 ubiquitin-conjugating enzyme]-L-cysteine + N(6)-ubiquitinyl-[acceptor protein]-L-lysine.. The protein operates within protein modification; protein ubiquitination. Functionally, E3 ubiquitin-protein ligase which is a component of the N-end rule pathway. Recognizes and binds to proteins bearing specific N-terminal residues that are destabilizing according to the N-end rule, leading to their ubiquitination and subsequent degradation. This is Putative E3 ubiquitin-protein ligase UBR7 (Ubr7) from Mus musculus (Mouse).